We begin with the raw amino-acid sequence, 2592 residues long: 6-hydroxymellein synthase cdmE (2592 aa).

Over residues 1–11 (MVLHPSDRRFP) the composition is skewed to basic and acidic residues. Positions 1 to 25 (MVLHPSDRRFPETNGVGGHSKDSSA) are disordered. Residues 32-456 (LEPLAIVGFA…GTNAHVVLES (425 aa)) form the Ketosynthase family 3 (KS3) domain. Catalysis depends on for beta-ketoacyl synthase activity residues Cys-205, His-340, and His-379. The tract at residues 589 to 910 (VFTGQGAQWP…RYSHTITRKK (322 aa)) is malonyl-CoA:ACP transacylase (MAT) domain. The N-terminal hotdog fold stretch occupies residues 978 to 1113 (HELLGSPDPD…GFIESKCESD (136 aa)). A dehydratase (DH) domain region spans residues 978-1291 (HELLGSPDPD…IRGTELCLLS (314 aa)). The PKS/mFAS DH domain maps to 978 to 1296 (HELLGSPDPD…LCLLSAGRGD (319 aa)). Residues 1140 to 1296 (TQIGSISAFY…LCLLSAGRGD (157 aa)) form a C-terminal hotdog fold region. 2 residues coordinate S-adenosyl-L-methionine: Ile-1462 and Glu-1484. Residues 1483–1591 (LEIGTGFGSV…HSLLKPGGKL (109 aa)) form a methyltransferase (CMeT) domain region. The segment at 1887-2199 (GLLVWSDDEA…NDSNMDTAVI (313 aa)) is enoyl reductase (ER) domain. The tract at residues 2223–2398 (ATYVIAGGLG…IPGMSVNLGN (176 aa)) is ketoreductase (KR) domain. The 78-residue stretch at 2509–2586 (VAASHVTEAI…GLSEKIARQS (78 aa)) folds into the Carrier domain. An O-(pantetheine 4'-phosphoryl)serine modification is found at Ser-2546.

The catalysed reaction is 5 malonyl-CoA + AH2 + 5 H(+) = 6-hydroxymellein + A + 5 CO2 + 5 CoA + H2O. It participates in secondary metabolite biosynthesis; terpenoid biosynthesis. Functionally, highly reducing polyketide synthase; part of the gene cluster that mediates the biosynthesis of chrodrimanin B, a meroterpenoid that acts as a potent blocker of insect GABA-gated chloride channels. The first step of the pathway is the biosynthesis of 6-hydroxymellein by the polyketide synthase cdmE. The prenyltransferase cdmH acts as a 6-hydroxymellein 5-farnesyltransferase and produces the hydrophobic metabolite verruculide C. The FAD-dependent monooxygenase cdmI further converts verruculide C into verruculide B. The terpene cyclase cdmG then produced the pentacyclic molecule 3-hydroxypentacecilide A, the backbone structure of chrodrimanin B, via folding the farnesyl moiety of the substrate into the chair-boat conformation. The short-chain dehydrogenase/reductase cdmF functions as the 3-OH dehydrogenase that oxidizes the C-3 hydroxyl group of 3-hydroxypentacecilide A and produces chrodrimanin C, the dehydrogenated product of 3-hydroxypentacecilide A. The cytochrome P450 monooxygenase cdmJ then accepts both 3-hydroxypentacecilide A and chrodrimanin C and functions as a C-7-beta-hydroxylase to produce respectively chrodrimanin H and chrodrimanin F. The dioxygenase cdmA accepts chrodrimanin H to afford chrodrimanin E, which is further transformed to chrodrimanin A by the dioxygenase cdmD. CdmA can also accept chrodrimanin C as substrate to convert it into verruculide A, which is further converted into chrodrimanin T by cdmD. The last step of the biosynthesis is proposed to be performed by the acetyltransferase cdmC which acetylates chrodrimanin A to yield chrodrimanin B. The pathway may also lead to the production of additional shunt products, including chrodrimanins T and U. The protein is 6-hydroxymellein synthase cdmE of Talaromyces verruculosus (Penicillium verruculosum).